We begin with the raw amino-acid sequence, 378 residues long: tRNA-specific 2-thiouridylase MnmA (378 aa).

Residues 6 to 13 (AMSGGVDS) and Leu-32 contribute to the ATP site. Cys-101 functions as the Nucleophile in the catalytic mechanism. A disulfide bridge links Cys-101 with Cys-199. Gly-125 provides a ligand contact to ATP. The tract at residues 148-150 (KDQ) is interaction with tRNA. Residue Cys-199 is the Cysteine persulfide intermediate of the active site.

Belongs to the MnmA/TRMU family.

Its subcellular location is the cytoplasm. The catalysed reaction is S-sulfanyl-L-cysteinyl-[protein] + uridine(34) in tRNA + AH2 + ATP = 2-thiouridine(34) in tRNA + L-cysteinyl-[protein] + A + AMP + diphosphate + H(+). Catalyzes the 2-thiolation of uridine at the wobble position (U34) of tRNA, leading to the formation of s(2)U34. The polypeptide is tRNA-specific 2-thiouridylase MnmA (Micrococcus luteus (strain ATCC 4698 / DSM 20030 / JCM 1464 / CCM 169 / CCUG 5858 / IAM 1056 / NBRC 3333 / NCIMB 9278 / NCTC 2665 / VKM Ac-2230) (Micrococcus lysodeikticus)).